The primary structure comprises 503 residues: uncharacterized protein (503 aa).

Residues isoleucine 26–alanine 46 form a helical membrane-spanning segment. Disordered stretches follow at residues arginine 155–methionine 176, tyrosine 311–glutamate 381, glutamine 436–glycine 456, and valine 472–asparagine 503. Composition is skewed to basic and acidic residues over residues tyrosine 311–glutamate 322 and asparagine 334–serine 346. Residues alanine 348 to glutamine 367 are compositionally biased toward polar residues. Positions serine 493 to asparagine 503 are enriched in basic residues.

Its subcellular location is the membrane. This is an uncharacterized protein from Mus musculus (Mouse).